The sequence spans 230 residues: Phosphoribosylformylglycinamidine synthase subunit PurQ (230 aa).

Positions Ser3–Ser230 constitute a Glutamine amidotransferase type-1 domain. Cys87 acts as the Nucleophile in catalysis. Active-site residues include His204 and Glu206.

As to quaternary structure, part of the FGAM synthase complex composed of 1 PurL, 1 PurQ and 2 PurS subunits.

It localises to the cytoplasm. The enzyme catalyses N(2)-formyl-N(1)-(5-phospho-beta-D-ribosyl)glycinamide + L-glutamine + ATP + H2O = 2-formamido-N(1)-(5-O-phospho-beta-D-ribosyl)acetamidine + L-glutamate + ADP + phosphate + H(+). It carries out the reaction L-glutamine + H2O = L-glutamate + NH4(+). It functions in the pathway purine metabolism; IMP biosynthesis via de novo pathway; 5-amino-1-(5-phospho-D-ribosyl)imidazole from N(2)-formyl-N(1)-(5-phospho-D-ribosyl)glycinamide: step 1/2. Its function is as follows. Part of the phosphoribosylformylglycinamidine synthase complex involved in the purines biosynthetic pathway. Catalyzes the ATP-dependent conversion of formylglycinamide ribonucleotide (FGAR) and glutamine to yield formylglycinamidine ribonucleotide (FGAM) and glutamate. The FGAM synthase complex is composed of three subunits. PurQ produces an ammonia molecule by converting glutamine to glutamate. PurL transfers the ammonia molecule to FGAR to form FGAM in an ATP-dependent manner. PurS interacts with PurQ and PurL and is thought to assist in the transfer of the ammonia molecule from PurQ to PurL. The protein is Phosphoribosylformylglycinamidine synthase subunit PurQ of Rhodospirillum rubrum (strain ATCC 11170 / ATH 1.1.1 / DSM 467 / LMG 4362 / NCIMB 8255 / S1).